The following is a 360-amino-acid chain: Phospho-N-acetylmuramoyl-pentapeptide-transferase (360 aa).

The next 10 membrane-spanning stretches (helical) occupy residues 18 to 38, 73 to 93, 97 to 117, 135 to 155, 168 to 188, 199 to 219, 236 to 256, 263 to 283, 288 to 308, and 339 to 359; these read VFSY…MMSL, TMGG…WADL, YVWA…VDDY, FWQS…STQA, VLPQ…VGTS, GLAI…AYLT, ASEL…FLWF, VFMG…IAVL, LLLI…ILQV, and IVRF…TLKI.

Belongs to the glycosyltransferase 4 family. MraY subfamily. Mg(2+) serves as cofactor.

The protein localises to the cell inner membrane. It carries out the reaction UDP-N-acetyl-alpha-D-muramoyl-L-alanyl-gamma-D-glutamyl-meso-2,6-diaminopimeloyl-D-alanyl-D-alanine + di-trans,octa-cis-undecaprenyl phosphate = di-trans,octa-cis-undecaprenyl diphospho-N-acetyl-alpha-D-muramoyl-L-alanyl-D-glutamyl-meso-2,6-diaminopimeloyl-D-alanyl-D-alanine + UMP. It participates in cell wall biogenesis; peptidoglycan biosynthesis. Functionally, catalyzes the initial step of the lipid cycle reactions in the biosynthesis of the cell wall peptidoglycan: transfers peptidoglycan precursor phospho-MurNAc-pentapeptide from UDP-MurNAc-pentapeptide onto the lipid carrier undecaprenyl phosphate, yielding undecaprenyl-pyrophosphoryl-MurNAc-pentapeptide, known as lipid I. The protein is Phospho-N-acetylmuramoyl-pentapeptide-transferase of Pseudoalteromonas translucida (strain TAC 125).